Here is a 187-residue protein sequence, read N- to C-terminus: Large ribosomal subunit protein uL18 (187 aa).

Belongs to the universal ribosomal protein uL18 family. Part of the 50S ribosomal subunit. Interacts with proteins L5 and L21e, and attaches the 5S rRNA to the 23S rRNA. Has been cross-linked to L21e.

In terms of biological role, this is one of 5 proteins that mediate the attachment of the 5S rRNA onto the large ribosomal subunit, where it forms part of the central protuberance and stabilizes the orientation of adjacent RNA domains. The protein is Large ribosomal subunit protein uL18 (rpl18) of Haloarcula marismortui (strain ATCC 43049 / DSM 3752 / JCM 8966 / VKM B-1809) (Halobacterium marismortui).